Consider the following 103-residue polypeptide: Co-chaperonin GroES (103 aa).

The protein belongs to the GroES chaperonin family. In terms of assembly, heptamer of 7 subunits arranged in a ring. Interacts with the chaperonin GroEL.

The protein resides in the cytoplasm. In terms of biological role, together with the chaperonin GroEL, plays an essential role in assisting protein folding. The GroEL-GroES system forms a nano-cage that allows encapsulation of the non-native substrate proteins and provides a physical environment optimized to promote and accelerate protein folding. GroES binds to the apical surface of the GroEL ring, thereby capping the opening of the GroEL channel. The polypeptide is Co-chaperonin GroES (Prochlorococcus marinus (strain MIT 9211)).